We begin with the raw amino-acid sequence, 37 residues long: Hemextin B (37 aa).

Heterotetramer composed of 2 hemextin A and 2 hemextin B chains; non-covalently linked. Does not exist as a complex in the crude venom. May contain several disulfide bonds. As to expression, expressed by the venom gland.

It is found in the secreted. Its function is as follows. Hemextin B (monomer): does not show anticoagulant activity. Seems only to synergitically enhance hemextin A activity. Hemextin AB complex: specifically inhibits the activation of FX (F10) by the TF-FVIIa complex (extrinsic tenase complex (ETC)) (IC(50)= 100 nM, Ki=50 nM) by non-competitively inhibiting the enzymatic activity of FVIIa. In Hemachatus haemachatus (Rinkhals), this protein is Hemextin B.